The chain runs to 474 residues: Nuclear hormone receptor family member nhr-91 (474 aa).

A disordered region spans residues 50-69; the sequence is SMTPSFSQTESPNSETDDST. The span at 51-69 shows a compositional bias: polar residues; the sequence is MTPSFSQTESPNSETDDST. Residues 97-172 constitute a DNA-binding region (nuclear receptor); the sequence is SKLCSVCGDK…KGMLTEAVRE (76 aa). NR C4-type zinc fingers lie at residues 100–120 and 136–155; these read CSVC…CEGC and CSQD…CQSC. The 260-residue stretch at 215 to 474 folds into the NR LBD domain; that stretch reads SGKKLIKELV…KNPRRLVFDE (260 aa).

Belongs to the nuclear hormone receptor family.

Its subcellular location is the nucleus. Orphan nuclear receptor. The chain is Nuclear hormone receptor family member nhr-91 (nhr-91) from Caenorhabditis elegans.